The primary structure comprises 378 residues: tRNA (guanine(26)-N(2))-dimethyltransferase (378 aa).

A Trm1 methyltransferase domain is found at 4 to 374 (KEVTEGKVRI…KGYEEIIRCV (371 aa)). S-adenosyl-L-methionine-binding residues include arginine 44, arginine 69, aspartate 87, aspartate 114, and alanine 115. 4 residues coordinate Zn(2+): cysteine 246, cysteine 249, cysteine 263, and cysteine 266.

Belongs to the class I-like SAM-binding methyltransferase superfamily. Trm1 family.

The catalysed reaction is guanosine(26) in tRNA + 2 S-adenosyl-L-methionine = N(2)-dimethylguanosine(26) in tRNA + 2 S-adenosyl-L-homocysteine + 2 H(+). In terms of biological role, dimethylates a single guanine residue at position 26 of a number of tRNAs using S-adenosyl-L-methionine as donor of the methyl groups. In Saccharolobus islandicus (strain Y.G.57.14 / Yellowstone #1) (Sulfolobus islandicus), this protein is tRNA (guanine(26)-N(2))-dimethyltransferase.